We begin with the raw amino-acid sequence, 149 residues long: Pleckstrin homology domain-containing family J member 1 (149 aa).

The region spanning 15–108 (PAEMAAELGM…WMEALRRASY (94 aa)) is the PH domain.

Expressed in testis and liver.

The protein is Pleckstrin homology domain-containing family J member 1 (PLEKHJ1) of Homo sapiens (Human).